The primary structure comprises 471 residues: O-acetyltransferase astG (471 aa).

The protein belongs to the fumigaclavine B O-acetyltransferase family. As to quaternary structure, monomer.

The enzyme catalyses dideacetyl astellolide A + acetyl-CoA = 14-deacetyl astellolide A + CoA. It carries out the reaction dideacetyl astellolide B + acetyl-CoA = 14-deacetyl astellolide B + CoA. It functions in the pathway secondary metabolite biosynthesis; terpenoid biosynthesis. O-acetyltransferase; part of the gene cluster that mediates the biosynthesis of astellolides, drimane-type sesquiterpene esters that show antimicrobial, anti-inflammatory, and anti-tumor activities. The first step in astellolide biosynthesis is performed by the sesquiterpene cyclase astC that catalyzes the formation of drimanyl pyrophosphate from farnesyl pyrophosphate. Drimanyl pyrophosphate is then dephosphorylated by the sesquiterpene phosphatase astI to produce drimanyl monophosphate which is further dephosphorylated to drim-8-ene-11-ol by atsK. Drim-8-ene-11-ol is converted to confertifolin, probably by the cytochrome P450 monooxygenase astD and/or the dehydrogenase astE. The cytochrome P450 monooxygenases astB, astF and astJ then hydroxylate confertifolin at C6, C14, or C15 to form trihydroxy confertifolin. The nonribosomal peptide synthetase astA catalyzes ester bond formation between trihydroxy contifolin and benzoic acid (BA) or 4-hydroxy benzoic acid (4HBA), leading to the formation of dideacetyl astellolides A and B, respectively. Finally, the O-acetyltransferase astG converts dideacetyl astellolides A and B into deacetyl astellolides A and B. In Aspergillus oryzae (strain ATCC 42149 / RIB 40) (Yellow koji mold), this protein is O-acetyltransferase astG.